Here is a 449-residue protein sequence, read N- to C-terminus: Probable phosphoglucosamine mutase (449 aa).

S96 acts as the Phosphoserine intermediate in catalysis. Mg(2+) is bound by residues S96, D233, D235, and D237. Phosphoserine is present on S96.

This sequence belongs to the phosphohexose mutase family. Requires Mg(2+) as cofactor. Post-translationally, activated by phosphorylation.

The catalysed reaction is alpha-D-glucosamine 1-phosphate = D-glucosamine 6-phosphate. Its function is as follows. Catalyzes the conversion of glucosamine-6-phosphate to glucosamine-1-phosphate. Does not display phosphoglucomutase (PGM) or phosphomannomutase (PMM) activities. This chain is Probable phosphoglucosamine mutase (glmM), found in Thermococcus kodakarensis (strain ATCC BAA-918 / JCM 12380 / KOD1) (Pyrococcus kodakaraensis (strain KOD1)).